Reading from the N-terminus, the 848-residue chain is Trimethylamine-N-oxide reductase 1 (848 aa).

Positions 1 to 39 (MNNNDLFQASRRRFLAQLGGLTVAGMLGPSLLTSRRATA) form a signal peptide, tat-type signal. Serine 191 lines the Mo-bis(molybdopterin guanine dinucleotide) pocket.

It belongs to the prokaryotic molybdopterin-containing oxidoreductase family. Interacts with the N-terminal domain of TorC. Requires Mo-bis(molybdopterin guanine dinucleotide) as cofactor. Predicted to be exported by the Tat system. The position of the signal peptide cleavage has not been experimentally proven.

It is found in the periplasm. The enzyme catalyses trimethylamine + 2 Fe(III)-[cytochrome c] + H2O = trimethylamine N-oxide + 2 Fe(II)-[cytochrome c] + 3 H(+). Functionally, reduces trimethylamine-N-oxide (TMAO) into trimethylamine; an anaerobic reaction coupled to energy-yielding reactions. This chain is Trimethylamine-N-oxide reductase 1 (torA), found in Escherichia coli O157:H7.